The following is a 524-amino-acid chain: General transcription factor IIF subunit 1 (524 aa).

Disordered stretches follow at residues 56 to 76 (MYQE…RKQR) and 181 to 462 (RLKD…IQLT). Residues 242–257 (KPQKKVPAKGGKKKKR) show a composition bias toward basic residues. A compositionally biased stretch (acidic residues) spans 262–289 (EALEDSDDGDFEGQEVDYMSDESSSDEE). Positions 290–307 (LPGKIKPAKEEEGPKGLD) are enriched in basic and acidic residues. Acidic residues-rich tracts occupy residues 308–327 (EQSE…EEGE) and 347–358 (SDESETSEDSDI). The span at 368-378 (QKKKTPPKKDK) shows a compositional bias: basic residues. Residues 381–397 (GSNSSSRGNSRPGTPSP) show a composition bias toward low complexity. Over residues 436–459 (PQNTSGKSTPQPQSGKSTPSSGDI) the composition is skewed to polar residues.

This sequence belongs to the TFIIF alpha subunit family. As to quaternary structure, heterodimer of an alpha and a beta subunit. Phosphorylated on Ser and other residues by TAF1 and casein kinase II-like kinases.

It is found in the nucleus. TFIIF is a general transcription initiation factor that binds to RNA polymerase II and helps to recruit it to the initiation complex in collaboration with TFIIB. It promotes transcription elongation. This chain is General transcription factor IIF subunit 1 (gtf2f1), found in Xenopus laevis (African clawed frog).